The following is a 66-amino-acid chain: Large ribosomal subunit protein bL35 (66 aa).

The segment covering 1–16 (MPKQKTHRASAKRFKR) has biased composition (basic residues). Residues 1 to 20 (MPKQKTHRASAKRFKRTGNG) are disordered.

This sequence belongs to the bacterial ribosomal protein bL35 family.

The polypeptide is Large ribosomal subunit protein bL35 (Lactococcus lactis subsp. lactis (strain IL1403) (Streptococcus lactis)).